The chain runs to 184 residues: Putative manganese efflux pump MntP (184 aa).

6 consecutive transmembrane segments (helical) span residues 12-32, 39-59, 63-83, 99-119, 132-152, and 164-184; these read SIMA…MGMI, IIYI…FGML, LLSG…LLVL, FIAP…LDSF, VWMT…LGLL, and YSGA…LFPL.

It belongs to the MntP (TC 9.B.29) family.

The protein resides in the cell membrane. Probably functions as a manganese efflux pump. In Bacillus pumilus (strain SAFR-032), this protein is Putative manganese efflux pump MntP.